Here is a 395-residue protein sequence, read N- to C-terminus: Calsequestrin-1 (395 aa).

The N-terminal stretch at 1–28 (MNAADRMGARVALLLLLVLGSPQSGVHG) is a signal peptide. Position 37 is a phosphotyrosine (Y37). A Phosphoserine modification is found at S75. T118 bears the Phosphothreonine mark. Phosphoserine is present on S210. N-linked (GlcNAc...) asparagine glycosylation is present at N344. Positions 376 to 395 (EGEINTEDDDDEDDDDDDDD) are disordered.

Belongs to the calsequestrin family. As to quaternary structure, monomer; increases in response to a depletion of intracellular calcium. Homodimer. Homotetramer and homopolymer. Can form linear homooligomers. Ca(2+) ions promote oligomerization. Interacts (via C-terminal end and preferentially with the monomeric form) with STIM1; this interaction increases in response to a depletion of intracellular calcium, decreases both STIM1 aggregation and clustering, interaction of STIM1 with ORAI1 and store-operated Ca(2+) entry (SOCE) activity. Interacts with ASPH and TRDN. In terms of processing, N-glycosylated. Detected in skeletal muscle (at protein level). Detected in skeletal muscle.

The protein localises to the endoplasmic reticulum. It localises to the sarcoplasmic reticulum. The protein resides in the sarcoplasmic reticulum lumen. It is found in the mitochondrion matrix. Its subcellular location is the sarcoplasmic reticulum membrane. Functionally, calsequestrin is a high-capacity, moderate affinity, calcium-binding protein and thus acts as an internal calcium store in muscle. Calcium ions are bound by clusters of acidic residues at the protein surface, often at the interface between subunits. Can bind around 80 Ca(2+) ions. Regulates the release of lumenal Ca(2+) via the calcium release channel RYR1; this plays an important role in triggering muscle contraction. Negatively regulates store-operated Ca(2+) entry (SOCE) activity. The sequence is that of Calsequestrin-1 (CASQ1) from Oryctolagus cuniculus (Rabbit).